The primary structure comprises 294 residues: tRNA pseudouridine synthase B (294 aa).

D38 acts as the Nucleophile in catalysis.

This sequence belongs to the pseudouridine synthase TruB family. Type 1 subfamily.

The catalysed reaction is uridine(55) in tRNA = pseudouridine(55) in tRNA. In terms of biological role, responsible for synthesis of pseudouridine from uracil-55 in the psi GC loop of transfer RNAs. The protein is tRNA pseudouridine synthase B of Clostridium perfringens (strain SM101 / Type A).